Reading from the N-terminus, the 229-residue chain is Octanoyltransferase (229 aa).

Positions 30–223 (PDTPDTIWLV…QLQQRAQAHP (194 aa)) constitute a BPL/LPL catalytic domain. Substrate is bound by residues 69 to 76 (RGGQITYH), 141 to 143 (ALG), and 154 to 156 (GVS). The Acyl-thioester intermediate role is filled by cysteine 172.

The protein belongs to the LipB family.

It is found in the cytoplasm. It carries out the reaction octanoyl-[ACP] + L-lysyl-[protein] = N(6)-octanoyl-L-lysyl-[protein] + holo-[ACP] + H(+). It participates in protein modification; protein lipoylation via endogenous pathway; protein N(6)-(lipoyl)lysine from octanoyl-[acyl-carrier-protein]: step 1/2. Catalyzes the transfer of endogenously produced octanoic acid from octanoyl-acyl-carrier-protein onto the lipoyl domains of lipoate-dependent enzymes. Lipoyl-ACP can also act as a substrate although octanoyl-ACP is likely to be the physiological substrate. The protein is Octanoyltransferase of Ralstonia pickettii (strain 12J).